The primary structure comprises 204 residues: Translation initiation factor 2 subunit beta (204 aa).

The 59-residue stretch at 146–204 folds into the TRAM domain; sequence AIEEGKELEVHIESISKKGDGVARIGKYILYVAGTKAGQNVKVRITRISGQVAFTQKIL.

The protein belongs to the eIF-2-beta/eIF-5 family. Heterotrimer composed of an alpha, a beta and a gamma chain.

In terms of biological role, eIF-2 functions in the early steps of protein synthesis by forming a ternary complex with GTP and initiator tRNA. This is Translation initiation factor 2 subunit beta from Methanocorpusculum labreanum (strain ATCC 43576 / DSM 4855 / Z).